The sequence spans 547 residues: Cytochrome P450 78A1 (547 aa).

The segment covering 84–94 has biased composition (low complexity); sequence ASSRCPGAAAP. Positions 84–104 are disordered; that stretch reads ASSRCPGAAAPRPRRDGPRRR. Heme is bound at residue Cys490.

The protein belongs to the cytochrome P450 family. Heme serves as cofactor. As to expression, shoot apex.

The chain is Cytochrome P450 78A1 (CYP78A1) from Zea mays (Maize).